A 322-amino-acid polypeptide reads, in one-letter code: Fructose-1,6-bisphosphatase class 1 1 (322 aa).

Mg(2+) contacts are provided by E84, D103, L105, and D106. Substrate is bound by residues 106-109, N198, and K264; that span reads DGSS. Position 270 (E270) interacts with Mg(2+).

This sequence belongs to the FBPase class 1 family. Homotetramer. The cofactor is Mg(2+).

It is found in the cytoplasm. It catalyses the reaction beta-D-fructose 1,6-bisphosphate + H2O = beta-D-fructose 6-phosphate + phosphate. Its pathway is carbohydrate biosynthesis; gluconeogenesis. The protein is Fructose-1,6-bisphosphatase class 1 1 of Pseudoalteromonas translucida (strain TAC 125).